The chain runs to 137 residues: Small ribosomal subunit protein uS12 (137 aa).

The tract at residues 1-57 (MPTINQLIRKGRKSKGSKSNSPALNFGYNSYKKVQTNNSAPQKRGVATRVGTMTPKK) is disordered. Over residues 32 to 41 (KKVQTNNSAP) the composition is skewed to polar residues. The residue at position 102 (Asp-102) is a 3-methylthioaspartic acid.

The protein belongs to the universal ribosomal protein uS12 family. As to quaternary structure, part of the 30S ribosomal subunit. Contacts proteins S8 and S17. May interact with IF1 in the 30S initiation complex.

Its function is as follows. With S4 and S5 plays an important role in translational accuracy. Interacts with and stabilizes bases of the 16S rRNA that are involved in tRNA selection in the A site and with the mRNA backbone. Located at the interface of the 30S and 50S subunits, it traverses the body of the 30S subunit contacting proteins on the other side and probably holding the rRNA structure together. The combined cluster of proteins S8, S12 and S17 appears to hold together the shoulder and platform of the 30S subunit. This is Small ribosomal subunit protein uS12 from Ligilactobacillus salivarius (strain UCC118) (Lactobacillus salivarius).